The sequence spans 136 residues: Large ribosomal subunit protein uL16 (136 aa).

A compositionally biased stretch (basic residues) spans 1-17 (MLQPKRTKFRKRHKGRN). The segment at 1-21 (MLQPKRTKFRKRHKGRNRGLA) is disordered.

This sequence belongs to the universal ribosomal protein uL16 family. In terms of assembly, part of the 50S ribosomal subunit.

Functionally, binds 23S rRNA and is also seen to make contacts with the A and possibly P site tRNAs. The chain is Large ribosomal subunit protein uL16 from Buchnera aphidicola subsp. Acyrthosiphon kondoi (Acyrthosiphon kondoi symbiotic bacterium).